A 78-amino-acid polypeptide reads, in one-letter code: Hainantoxin-XX (78 aa).

The first 23 residues, 1–23 (MKSATLLALSFLLIALYFLICEA), serve as a signal peptide directing secretion. A propeptide spanning residues 24 to 47 (EHSRYEEHEILEENMGDVVNLEQR) is cleaved from the precursor. Intrachain disulfides connect Cys49–Cys62, Cys56–Cys66, and Cys61–Cys77.

This sequence belongs to the hainantoxin family. 20 subfamily. In terms of tissue distribution, expressed by the venom gland.

It is found in the secreted. Putative ion channel inhibitor. The chain is Hainantoxin-XX from Cyriopagopus hainanus (Chinese bird spider).